Consider the following 97-residue polypeptide: Small ribosomal subunit protein bS6 (97 aa).

This sequence belongs to the bacterial ribosomal protein bS6 family.

Functionally, binds together with bS18 to 16S ribosomal RNA. This chain is Small ribosomal subunit protein bS6, found in Listeria monocytogenes serotype 4b (strain CLIP80459).